A 180-amino-acid chain; its full sequence is Uterocalin (180 aa).

Residues 1 to 18 (MNLLLLAMGLILPRRPHA) form the signal peptide. Cys-82 and Cys-175 are disulfide-bonded. Asn-101 carries an N-linked (GlcNAc...) asparagine glycan.

Belongs to the calycin superfamily. Lipocalin family. As to expression, expressed in glandular and lumenal epithelia of the endometrium. Is transferred to the embryonic capsule, the conceptus and the yolk sac.

The protein localises to the secreted. Functionally, binds fatty acids and retinol. Is specialized for the preattachment embryo. May be important to maintain the pregnancy and may transport small hydrophobic ligands from mother to the developing embryo. In Equus caballus (Horse), this protein is Uterocalin.